The sequence spans 1204 residues: TPR repeat-containing protein DDB_G0287999 (1204 aa).

The segment covering 32-48 (TTDTTTTTSTSTTTDTD) has biased composition (low complexity). A disordered region spans residues 32 to 55 (TTDTTTTTSTSTTTDTDTNSEKSN). TPR repeat units follow at residues 263–296 (SKGL…YKDL), 379–412 (NDSN…DQLY), and 583–617 (IQHF…GSVT). The segment at 360–387 (QPPPQEQQLMDDDSNSNSNNDSNNIIKN) is disordered. A compositionally biased stretch (low complexity) spans 374 to 387 (NSNSNNDSNNIIKN). Disordered regions lie at residues 639 to 660 (NNNN…NNNN) and 761 to 797 (DDND…KTTT). Residues 766–778 (DNNNNNNNNNNNN) show a composition bias toward low complexity.

This is TPR repeat-containing protein DDB_G0287999 from Dictyostelium discoideum (Social amoeba).